The sequence spans 320 residues: Dimethyladenosine transferase (320 aa).

Residues H38, L40, G65, E86, D114, and N129 each contribute to the S-adenosyl-L-methionine site.

Belongs to the class I-like SAM-binding methyltransferase superfamily. rRNA adenine N(6)-methyltransferase family.

It carries out the reaction adenosine(1779)/adenosine(1780) in 18S rRNA + 4 S-adenosyl-L-methionine = N(6)-dimethyladenosine(1779)/N(6)-dimethyladenosine(1780) in 18S rRNA + 4 S-adenosyl-L-homocysteine + 4 H(+). In terms of biological role, specifically dimethylates two adjacent adenosines in the loop of a conserved hairpin near the 3'-end of 18S rRNA in the 40S particle. The protein is Dimethyladenosine transferase (DIM1) of Kluyveromyces lactis (strain ATCC 8585 / CBS 2359 / DSM 70799 / NBRC 1267 / NRRL Y-1140 / WM37) (Yeast).